Consider the following 751-residue polypeptide: Catalase-peroxidase (751 aa).

The tryptophyl-tyrosyl-methioninium (Trp-Tyr) (with M-266) cross-link spans Trp92–Tyr240. The active-site Proton acceptor is His93. Residues Tyr240–Met266 constitute a cross-link (tryptophyl-tyrosyl-methioninium (Tyr-Met) (with W-92)). His281 provides a ligand contact to heme b.

Belongs to the peroxidase family. Peroxidase/catalase subfamily. Homodimer or homotetramer. It depends on heme b as a cofactor. In terms of processing, formation of the three residue Trp-Tyr-Met cross-link is important for the catalase, but not the peroxidase activity of the enzyme.

It localises to the cytoplasm. The enzyme catalyses H2O2 + AH2 = A + 2 H2O. The catalysed reaction is 2 H2O2 = O2 + 2 H2O. In terms of biological role, bifunctional enzyme with both catalase and broad-spectrum peroxidase activity. The sequence is that of Catalase-peroxidase from Phaeosphaeria nodorum (strain SN15 / ATCC MYA-4574 / FGSC 10173) (Glume blotch fungus).